A 525-amino-acid chain; its full sequence is Neutrophil cytosol factor 2 (525 aa).

TPR repeat units lie at residues 37–70, 71–104, and 121–154; these read SRICFNIGCVNTILENLQAAEQAFTKSINRDKHS, AVAYFQRGMLYYRMEKYDLAIKDLKEALTQLRGN, and CEVLYNIALMHAKKEEWKKAEEQLALATNMKSEP. Residue Thr-233 is modified to Phosphothreonine. One can recognise an SH3 1 domain in the interval 240–299; that stretch reads LEGEAHRVLFGFVPETPEELQVMPGNIVFVLKKGSDNWATVMFNGQKGLVPCNYLEPVEL. The disordered stretch occupies residues 304-343; sequence QSQPQEDTSPESDIPPPPNSSPPGRLQLSPGHKQKEPKEL. 2 positions are modified to phosphoserine: Ser-324 and Ser-398. Positions 350–428 constitute a PB1 domain; it reads PYMLKVHYKY…YCLTLWCEHT (79 aa). Residues 437 to 457 form a disordered region; sequence EPIQRENSDASKQTTEPQPKE. The 60-residue stretch at 456 to 515 folds into the SH3 2 domain; sequence KEGTQVVAIFSYEAAQPEDLEFVEGDVILVLSHVNEEWLEGECKGKVGIFPKAFVEGCAA.

This sequence belongs to the NCF2/NOXA1 family. Component of the phagocyte NADPH oxidase complex composed of an obligatory core heterodimer formed by the membrane proteins CYBA and CYBB and the cytosolic regulatory subunits NCF1/p47-phox, NCF2/p67-phox, NCF4/p40-phox and the small GTPase RAC1 or RAC2. Part of a cytosolic complex composed at least by NCF1, NCF2 and NCF4. Interacts with NCF4. Interacts (via the C-terminal SH3 domain) with NCF1 (via C-terminus). Interacts with SYTL1 and RAC1. May interact with NOXO1. Interacts with S100A8 and calprotectin (S100A8/9). Interacts with GBP7 (via GB1/RHD3-type G domain). Interacts with CYBB; the interaction is enhanced in the presence of GBP7.

The protein resides in the cytoplasm. Functionally, NCF2, NCF1, and a membrane bound cytochrome b558 are required for activation of the latent NADPH oxidase (necessary for superoxide production). Subunit of the phagocyte NADPH oxidase complex that mediates the transfer of electrons from cytosolic NADPH to O2 to produce the superoxide anion (O2(-)). In the activated complex, electrons are first transferred from NADPH to flavin adenine dinucleotide (FAD) and subsequently transferred via two heme molecules to molecular oxygen, producing superoxide through an outer-sphere reaction. Activation of the NADPH oxidase complex is initiated by the assembly of cytosolic subunits of the NADPH oxidase complex with the core NADPH oxidase complex to form a complex at the plasma membrane or phagosomal membrane. This activation process is initiated by phosphorylation dependent binding of the cytosolic NCF1/p47-phox subunit to the C-terminus of CYBA/p22-phox. This chain is Neutrophil cytosol factor 2, found in Mus musculus (Mouse).